A 144-amino-acid polypeptide reads, in one-letter code: 3-hydroxyacyl-[acyl-carrier-protein] dehydratase FabZ (144 aa).

Residue His-48 is part of the active site.

This sequence belongs to the thioester dehydratase family. FabZ subfamily.

Its subcellular location is the cytoplasm. The enzyme catalyses a (3R)-hydroxyacyl-[ACP] = a (2E)-enoyl-[ACP] + H2O. Functionally, involved in unsaturated fatty acids biosynthesis. Catalyzes the dehydration of short chain beta-hydroxyacyl-ACPs and long chain saturated and unsaturated beta-hydroxyacyl-ACPs. This Bacillus thuringiensis (strain Al Hakam) protein is 3-hydroxyacyl-[acyl-carrier-protein] dehydratase FabZ.